The sequence spans 339 residues: Glycerol-3-phosphate dehydrogenase [NAD(P)+] (339 aa).

Ser15, Tyr16, His36, and Lys110 together coordinate NADPH. Sn-glycerol 3-phosphate is bound by residues Lys110, Gly139, and Thr141. Residue Ala143 participates in NADPH binding. Sn-glycerol 3-phosphate contacts are provided by Lys195, Asp248, Ser258, Arg259, and Asn260. The active-site Proton acceptor is the Lys195. Residue Arg259 participates in NADPH binding. Residues Val283 and Glu285 each coordinate NADPH.

It belongs to the NAD-dependent glycerol-3-phosphate dehydrogenase family.

The protein resides in the cytoplasm. The enzyme catalyses sn-glycerol 3-phosphate + NAD(+) = dihydroxyacetone phosphate + NADH + H(+). It catalyses the reaction sn-glycerol 3-phosphate + NADP(+) = dihydroxyacetone phosphate + NADPH + H(+). It participates in membrane lipid metabolism; glycerophospholipid metabolism. Its function is as follows. Catalyzes the reduction of the glycolytic intermediate dihydroxyacetone phosphate (DHAP) to sn-glycerol 3-phosphate (G3P), the key precursor for phospholipid synthesis. The sequence is that of Glycerol-3-phosphate dehydrogenase [NAD(P)+] from Klebsiella pneumoniae (strain 342).